The primary structure comprises 317 residues: MSGRSPKALRAATANDRAQDRVRGLVIAAHGRHYIVAPEDGSAILQCFPRGKRSEIAVGDQVLYEPTSADQGVIVEIGERRNLLYRSDQYKSKLFAANLDQLLIVLATEPHFSEDLLGRALVAAEENELKPLIVLNKIDVEAALPLARKRLQLYRGLGYTVLEVSIKGQPDAARATLEAHLNGHSTLLLGQSGMGKSTLVNLLIPDAEVATREISTALNSGRHTTTFTRLYPLPGSEGALIDSPGFQEFGLHHLTEGKLERAFPEFRPLLAECRFYNCHHLHEPGCAILEAVADGRIAKERHALYAQLVHEASQIVR.

Residues 88–249 form the CP-type G domain; the sequence is DQYKSKLFAA…LIDSPGFQEF (162 aa). GTP contacts are provided by residues 136–139 and 190–198; these read NKID and GQSGMGKST. Cys273, Cys278, His280, and Cys286 together coordinate Zn(2+).

This sequence belongs to the TRAFAC class YlqF/YawG GTPase family. RsgA subfamily. As to quaternary structure, monomer. Associates with 30S ribosomal subunit, binds 16S rRNA. Requires Zn(2+) as cofactor.

Its subcellular location is the cytoplasm. Functionally, one of several proteins that assist in the late maturation steps of the functional core of the 30S ribosomal subunit. Helps release RbfA from mature subunits. May play a role in the assembly of ribosomal proteins into the subunit. Circularly permuted GTPase that catalyzes slow GTP hydrolysis, GTPase activity is stimulated by the 30S ribosomal subunit. The chain is Small ribosomal subunit biogenesis GTPase RsgA from Paraburkholderia phymatum (strain DSM 17167 / CIP 108236 / LMG 21445 / STM815) (Burkholderia phymatum).